The sequence spans 436 residues: Methylenetetrahydrofolate--tRNA-(uracil-5-)-methyltransferase TrmFO (436 aa).

Residue 11–16 coordinates FAD; it reads GAGLAG.

It belongs to the MnmG family. TrmFO subfamily. FAD is required as a cofactor.

It is found in the cytoplasm. The enzyme catalyses uridine(54) in tRNA + (6R)-5,10-methylene-5,6,7,8-tetrahydrofolate + NADH + H(+) = 5-methyluridine(54) in tRNA + (6S)-5,6,7,8-tetrahydrofolate + NAD(+). The catalysed reaction is uridine(54) in tRNA + (6R)-5,10-methylene-5,6,7,8-tetrahydrofolate + NADPH + H(+) = 5-methyluridine(54) in tRNA + (6S)-5,6,7,8-tetrahydrofolate + NADP(+). Catalyzes the folate-dependent formation of 5-methyl-uridine at position 54 (M-5-U54) in all tRNAs. This is Methylenetetrahydrofolate--tRNA-(uracil-5-)-methyltransferase TrmFO from Shouchella clausii (strain KSM-K16) (Alkalihalobacillus clausii).